We begin with the raw amino-acid sequence, 470 residues long: Na(+)-translocating NADH-quinone reductase subunit A (470 aa).

It belongs to the NqrA family. As to quaternary structure, composed of six subunits; NqrA, NqrB, NqrC, NqrD, NqrE and NqrF.

The enzyme catalyses a ubiquinone + n Na(+)(in) + NADH + H(+) = a ubiquinol + n Na(+)(out) + NAD(+). Its function is as follows. NQR complex catalyzes the reduction of ubiquinone-1 to ubiquinol by two successive reactions, coupled with the transport of Na(+) ions from the cytoplasm to the periplasm. NqrA to NqrE are probably involved in the second step, the conversion of ubisemiquinone to ubiquinol. The protein is Na(+)-translocating NADH-quinone reductase subunit A of Chlamydia caviae (strain ATCC VR-813 / DSM 19441 / 03DC25 / GPIC) (Chlamydophila caviae).